Here is a 101-residue protein sequence, read N- to C-terminus: Urease subunit beta (101 aa).

This sequence belongs to the urease beta subunit family. In terms of assembly, heterotrimer of UreA (gamma), UreB (beta) and UreC (alpha) subunits. Three heterotrimers associate to form the active enzyme.

The protein resides in the cytoplasm. The catalysed reaction is urea + 2 H2O + H(+) = hydrogencarbonate + 2 NH4(+). It functions in the pathway nitrogen metabolism; urea degradation; CO(2) and NH(3) from urea (urease route): step 1/1. The protein is Urease subunit beta of Rhizobium johnstonii (strain DSM 114642 / LMG 32736 / 3841) (Rhizobium leguminosarum bv. viciae).